The following is a 218-amino-acid chain: Adenylate kinase (218 aa).

10 to 15 contributes to the ATP binding site; sequence GAGKGT. The NMP stretch occupies residues 30–59; the sequence is STGDMLRAAVKAGTPLGQQAKAVMDAGKLV. Residues threonine 31, arginine 36, 57 to 59, 85 to 88, and glutamine 92 each bind AMP; these read KLV and GFPR. Residues 122 to 159 form an LID region; that stretch reads GRRSHPASGRTYHVKFNPPKVEGKDDVTGEDLIQREDD. ATP contacts are provided by residues arginine 123 and 132-133; that span reads TY. The segment at 127–147 is disordered; it reads PASGRTYHVKFNPPKVEGKDD. Residues arginine 156 and arginine 167 each contribute to the AMP site. Glycine 203 is a binding site for ATP.

This sequence belongs to the adenylate kinase family. In terms of assembly, monomer.

It localises to the cytoplasm. It carries out the reaction AMP + ATP = 2 ADP. The protein operates within purine metabolism; AMP biosynthesis via salvage pathway; AMP from ADP: step 1/1. In terms of biological role, catalyzes the reversible transfer of the terminal phosphate group between ATP and AMP. Plays an important role in cellular energy homeostasis and in adenine nucleotide metabolism. The polypeptide is Adenylate kinase (Paracidovorax citrulli (strain AAC00-1) (Acidovorax citrulli)).